Reading from the N-terminus, the 372-residue chain is tRNA-specific 2-thiouridylase MnmA (372 aa).

ATP contacts are provided by residues 9-16 (GMSGGVDS) and Met35. An interaction with target base in tRNA region spans residues 95 to 97 (NPD). The active-site Nucleophile is Cys100. Cys100 and Cys201 are oxidised to a cystine. Gly124 is a binding site for ATP. The interaction with tRNA stretch occupies residues 151-153 (KDQ). Cys201 (cysteine persulfide intermediate) is an active-site residue. An interaction with tRNA region spans residues 317–318 (RY).

This sequence belongs to the MnmA/TRMU family.

It is found in the cytoplasm. It catalyses the reaction S-sulfanyl-L-cysteinyl-[protein] + uridine(34) in tRNA + AH2 + ATP = 2-thiouridine(34) in tRNA + L-cysteinyl-[protein] + A + AMP + diphosphate + H(+). Catalyzes the 2-thiolation of uridine at the wobble position (U34) of tRNA, leading to the formation of s(2)U34. The polypeptide is tRNA-specific 2-thiouridylase MnmA (Herminiimonas arsenicoxydans).